A 425-amino-acid chain; its full sequence is Histidine--tRNA ligase (425 aa).

This sequence belongs to the class-II aminoacyl-tRNA synthetase family. Homodimer.

Its subcellular location is the cytoplasm. The catalysed reaction is tRNA(His) + L-histidine + ATP = L-histidyl-tRNA(His) + AMP + diphosphate + H(+). The protein is Histidine--tRNA ligase of Histophilus somni (strain 129Pt) (Haemophilus somnus).